An 860-amino-acid chain; its full sequence is Leucine--tRNA ligase (860 aa).

The short motif at 42 to 52 (PYPSGRLHMGH) is the 'HIGH' region element. A 'KMSKS' region motif is present at residues 619–623 (KMSKS). ATP is bound at residue lysine 622.

It belongs to the class-I aminoacyl-tRNA synthetase family.

It localises to the cytoplasm. It catalyses the reaction tRNA(Leu) + L-leucine + ATP = L-leucyl-tRNA(Leu) + AMP + diphosphate. The sequence is that of Leucine--tRNA ligase from Citrobacter koseri (strain ATCC BAA-895 / CDC 4225-83 / SGSC4696).